Reading from the N-terminus, the 248-residue chain is ATP synthase subunit a, chloroplastic (248 aa).

Transmembrane regions (helical) follow at residues 35-55 (GQVF…SFLG), 94-114 (VPYI…GALI), 133-153 (INTT…AGLS), 202-222 (VFTL…GLFA), and 224-244 (SIQA…AMEG).

The protein belongs to the ATPase A chain family. In terms of assembly, F-type ATPases have 2 components, CF(1) - the catalytic core - and CF(0) - the membrane proton channel. CF(1) has five subunits: alpha(3), beta(3), gamma(1), delta(1), epsilon(1). CF(0) has four main subunits: a, b, b' and c.

The protein resides in the plastid. It localises to the chloroplast thylakoid membrane. Functionally, key component of the proton channel; it plays a direct role in the translocation of protons across the membrane. The polypeptide is ATP synthase subunit a, chloroplastic (Porphyra purpurea (Red seaweed)).